Reading from the N-terminus, the 277-residue chain is Shikimate dehydrogenase (NADP(+)) (277 aa).

Residues 15–17 (SLS) and Thr-62 each bind shikimate. Lys-66 serves as the catalytic Proton acceptor. 2 residues coordinate shikimate: Asn-87 and Asp-102. Residues 127 to 131 (GAGGA), 151 to 156 (NRTVDK), and Ile-219 contribute to the NADP(+) site. Shikimate is bound at residue Tyr-221. Gly-242 lines the NADP(+) pocket.

The protein belongs to the shikimate dehydrogenase family. In terms of assembly, homodimer.

It catalyses the reaction shikimate + NADP(+) = 3-dehydroshikimate + NADPH + H(+). Its pathway is metabolic intermediate biosynthesis; chorismate biosynthesis; chorismate from D-erythrose 4-phosphate and phosphoenolpyruvate: step 4/7. Functionally, involved in the biosynthesis of the chorismate, which leads to the biosynthesis of aromatic amino acids. Catalyzes the reversible NADPH linked reduction of 3-dehydroshikimate (DHSA) to yield shikimate (SA). The polypeptide is Shikimate dehydrogenase (NADP(+)) (Bacillus cereus (strain AH820)).